We begin with the raw amino-acid sequence, 267 residues long: tRNA-cytidine(32) 2-sulfurtransferase (267 aa).

Residues 37–42 carry the PP-loop motif motif; sequence SGGKDS. [4Fe-4S] cluster-binding residues include C112, C115, and C203.

It belongs to the TtcA family. As to quaternary structure, homodimer. The cofactor is Mg(2+). [4Fe-4S] cluster is required as a cofactor.

The protein resides in the cytoplasm. It catalyses the reaction cytidine(32) in tRNA + S-sulfanyl-L-cysteinyl-[cysteine desulfurase] + AH2 + ATP = 2-thiocytidine(32) in tRNA + L-cysteinyl-[cysteine desulfurase] + A + AMP + diphosphate + H(+). Its pathway is tRNA modification. Functionally, catalyzes the ATP-dependent 2-thiolation of cytidine in position 32 of tRNA, to form 2-thiocytidine (s(2)C32). The sulfur atoms are provided by the cysteine/cysteine desulfurase (IscS) system. This is tRNA-cytidine(32) 2-sulfurtransferase from Dichelobacter nodosus (strain VCS1703A).